The primary structure comprises 473 residues: Ribosomal RNA small subunit methyltransferase F (473 aa).

S-adenosyl-L-methionine is bound by residues 124–130 (ASAPGSK), E148, D175, and D193. C246 acts as the Nucleophile in catalysis.

The protein belongs to the class I-like SAM-binding methyltransferase superfamily. RsmB/NOP family.

Its subcellular location is the cytoplasm. The catalysed reaction is cytidine(1407) in 16S rRNA + S-adenosyl-L-methionine = 5-methylcytidine(1407) in 16S rRNA + S-adenosyl-L-homocysteine + H(+). Its function is as follows. Specifically methylates the cytosine at position 1407 (m5C1407) of 16S rRNA. In Aliivibrio fischeri (strain MJ11) (Vibrio fischeri), this protein is Ribosomal RNA small subunit methyltransferase F.